The chain runs to 223 residues: ATP-dependent dethiobiotin synthetase BioD (223 aa).

Thr-16 is a binding site for Mg(2+). Lys-37 is an active-site residue. Residue Ser-41 coordinates substrate. 2 residues coordinate Mg(2+): Asp-50 and Glu-111. Residues Asp-50, 111 to 114, and 171 to 172 contribute to the ATP site; these read EGAG and NR.

The protein belongs to the dethiobiotin synthetase family. In terms of assembly, homodimer. Mg(2+) is required as a cofactor.

The protein localises to the cytoplasm. The enzyme catalyses (7R,8S)-7,8-diammoniononanoate + CO2 + ATP = (4R,5S)-dethiobiotin + ADP + phosphate + 3 H(+). It functions in the pathway cofactor biosynthesis; biotin biosynthesis; biotin from 7,8-diaminononanoate: step 1/2. Catalyzes a mechanistically unusual reaction, the ATP-dependent insertion of CO2 between the N7 and N8 nitrogen atoms of 7,8-diaminopelargonic acid (DAPA, also called 7,8-diammoniononanoate) to form a ureido ring. This Anaeromyxobacter dehalogenans (strain 2CP-C) protein is ATP-dependent dethiobiotin synthetase BioD.